A 942-amino-acid chain; its full sequence is Eukaryotic translation initiation factor 3 subunit A (942 aa).

The PCI domain occupies 320–494 (FKKYSSIILL…NTVTFFKDPF (175 aa)). 4 coiled-coil regions span residues 499–529 (KAAG…GEEI), 588–669 (ITQT…KQRE), 705–734 (SKLS…AYRK), and 821–912 (IEEV…RKAQ). Residues 502–546 (GTVEEEEEEEEEEGEEVEGEEAETGEEIVEEGEEHENEENKEPEP) form a disordered region. Positions 504–538 (VEEEEEEEEEEGEEVEGEEAETGEEIVEEGEEHEN) are enriched in acidic residues. 2 stretches are compositionally biased toward basic and acidic residues: residues 836–870 (RKAE…ERKS) and 889–911 (RSAK…ERKA). Residues 836 to 942 (RKAEIEAEER…KMKLRRASKK (107 aa)) form a disordered region.

Belongs to the eIF-3 subunit A family. In terms of assembly, component of the eukaryotic translation initiation factor 3 (eIF-3) complex.

It is found in the cytoplasm. In terms of biological role, RNA-binding component of the eukaryotic translation initiation factor 3 (eIF-3) complex, which is involved in protein synthesis of a specialized repertoire of mRNAs and, together with other initiation factors, stimulates binding of mRNA and methionyl-tRNAi to the 40S ribosome. The eIF-3 complex specifically targets and initiates translation of a subset of mRNAs involved in cell proliferation. The chain is Eukaryotic translation initiation factor 3 subunit A from Vanderwaltozyma polyspora (strain ATCC 22028 / DSM 70294 / BCRC 21397 / CBS 2163 / NBRC 10782 / NRRL Y-8283 / UCD 57-17) (Kluyveromyces polysporus).